The chain runs to 196 residues: Probable thymidylate kinase (196 aa).

Gly-8–Thr-15 is an ATP binding site.

Belongs to the thymidylate kinase family.

The catalysed reaction is dTMP + ATP = dTDP + ADP. This is Probable thymidylate kinase from Metallosphaera sedula (strain ATCC 51363 / DSM 5348 / JCM 9185 / NBRC 15509 / TH2).